A 293-amino-acid polypeptide reads, in one-letter code: Immediate early response gene 5-like protein (293 aa).

The protein belongs to the IER family.

The sequence is that of Immediate early response gene 5-like protein (ier5l) from Xenopus laevis (African clawed frog).